The chain runs to 554 residues: Intraflagellar transport protein 56 (554 aa).

A disordered region spans residues 1 to 24 (MMLSRAKPAVGRGVQHTDKRKKKG). 4 TPR repeats span residues 57–90 (EDTN…ENCN), 92–125 (EVWV…LQNR), 151–184 (TEDQ…NREY), and 468–501 (ANDC…EGKR).

It belongs to the IFT56 family. Component of the IFT complex B. Interacts with IFT46; the interaction is direct.

It localises to the cell projection. It is found in the cilium. In terms of biological role, component of the intraflagellar transport (IFT) complex B required for transport of proteins in the motile cilium. Required for transport of specific ciliary cargo proteins related to motility, while it is neither required for IFT complex B assembly or motion nor for cilium assembly. Required for efficient coupling between the accumulation of GLI2 and GLI3 at the ciliary tips and their dissociation from the negative regulator SUFU. Plays a key role in maintaining the integrity of the IFT complex B and the proper ciliary localization of the IFT complex B components. Not required for IFT complex A ciliary localization or function. Essential for maintaining proper microtubule organization within the ciliary axoneme. This chain is Intraflagellar transport protein 56, found in Homo sapiens (Human).